The primary structure comprises 239 residues: 1-(5-phosphoribosyl)-5-[(5-phosphoribosylamino)methylideneamino] imidazole-4-carboxamide isomerase (239 aa).

The active-site Proton acceptor is Asp8. Asp129 (proton donor) is an active-site residue.

The protein belongs to the HisA/HisF family.

It is found in the cytoplasm. The catalysed reaction is 1-(5-phospho-beta-D-ribosyl)-5-[(5-phospho-beta-D-ribosylamino)methylideneamino]imidazole-4-carboxamide = 5-[(5-phospho-1-deoxy-D-ribulos-1-ylimino)methylamino]-1-(5-phospho-beta-D-ribosyl)imidazole-4-carboxamide. The protein operates within amino-acid biosynthesis; L-histidine biosynthesis; L-histidine from 5-phospho-alpha-D-ribose 1-diphosphate: step 4/9. The sequence is that of 1-(5-phosphoribosyl)-5-[(5-phosphoribosylamino)methylideneamino] imidazole-4-carboxamide isomerase from Roseobacter denitrificans (strain ATCC 33942 / OCh 114) (Erythrobacter sp. (strain OCh 114)).